We begin with the raw amino-acid sequence, 225 residues long: Uridylate kinase (225 aa).

ATP is bound at residue 9-10 (GS). G44 is a binding site for UMP. Residues G45 and R49 each contribute to the ATP site. Residues D66 and 114–120 (THPGHTT) contribute to the UMP site. Residues T140, N141, Y146, and D149 each contribute to the ATP site.

This sequence belongs to the UMP kinase family. Homohexamer.

The protein resides in the cytoplasm. It carries out the reaction UMP + ATP = UDP + ADP. It functions in the pathway pyrimidine metabolism; CTP biosynthesis via de novo pathway; UDP from UMP (UMPK route): step 1/1. Inhibited by UTP. Catalyzes the reversible phosphorylation of UMP to UDP. This is Uridylate kinase from Thermococcus gammatolerans (strain DSM 15229 / JCM 11827 / EJ3).